The primary structure comprises 243 residues: DNA repair protein RecO (243 aa).

This sequence belongs to the RecO family.

Involved in DNA repair and RecF pathway recombination. This chain is DNA repair protein RecO, found in Thermobifida fusca (strain YX).